A 160-amino-acid chain; its full sequence is Probable NADH dehydrogenase [ubiquinone] 1 beta subcomplex subunit 2, mitochondrial (160 aa).

This sequence belongs to the complex I NDUFB2 subunit family. As to quaternary structure, complex I is composed of 45 different subunits.

The protein localises to the mitochondrion inner membrane. In terms of biological role, accessory subunit of the mitochondrial membrane respiratory chain NADH dehydrogenase (Complex I), that is believed not to be involved in catalysis. Complex I functions in the transfer of electrons from NADH to the respiratory chain. The immediate electron acceptor for the enzyme is believed to be ubiquinone. The polypeptide is Probable NADH dehydrogenase [ubiquinone] 1 beta subcomplex subunit 2, mitochondrial (Caenorhabditis elegans).